The primary structure comprises 587 residues: Tyrosine-protein kinase transforming protein Src (587 aa).

The interval 1-58 (MGSSKSKPKDPSQRRRSLEPPDSTHHGGFPASQTPNKTAAPDTHRTPSRSFGTVATEP) is disordered. A lipid anchor (N-myristoyl glycine; by host) is attached at Gly2. Residues 7–25 (KPKDPSQRRRSLEPPDSTH) show a composition bias toward basic and acidic residues. One can recognise an SH3 domain in the interval 81–142 (GGVTTFVALY…PSNYVAPSDS (62 aa)). The 98-residue stretch at 148–245 (WYFGKITRRE…GLCHRLTNVC (98 aa)) folds into the SH2 domain. The 254-residue stretch at 267-520 (LRLEVKLGQG…YLQAFLEDYF (254 aa)) folds into the Protein kinase domain. Residues 273 to 281 (LGQGCFGEV) and Lys295 contribute to the ATP site. Residue Asp386 is the Proton acceptor of the active site. Tyr416 carries the phosphotyrosine; by autocatalysis modification.

This sequence belongs to the protein kinase superfamily. Tyr protein kinase family. SRC subfamily. Post-translationally, the phosphorylated form is termed pp60v-src.

It carries out the reaction L-tyrosyl-[protein] + ATP = O-phospho-L-tyrosyl-[protein] + ADP + H(+). This phosphoprotein, required for both the initiation and the maintenance of neoplastic transformation, is a protein kinase that catalyzes the phosphorylation of tyrosine residues in vitro. In Galliformes, this protein is Tyrosine-protein kinase transforming protein Src (V-SRC).